The following is a 183-amino-acid chain: RNA pyrophosphohydrolase (183 aa).

One can recognise a Nudix hydrolase domain in the interval 6 to 149 (GYRPNVGIIL…KREVYRLALE (144 aa)). A Nudix box motif is present at residues 38-59 (GGINAGETPEQAMFRELEEEVG).

It belongs to the Nudix hydrolase family. RppH subfamily. A divalent metal cation is required as a cofactor.

In terms of biological role, accelerates the degradation of transcripts by removing pyrophosphate from the 5'-end of triphosphorylated RNA, leading to a more labile monophosphorylated state that can stimulate subsequent ribonuclease cleavage. In Thiobacillus denitrificans (strain ATCC 25259 / T1), this protein is RNA pyrophosphohydrolase.